The chain runs to 569 residues: Pyrophosphate--fructose 6-phosphate 1-phosphotransferase subunit beta 2 (569 aa).

Gly-107 is a binding site for diphosphate. Asp-201 lines the Mg(2+) pocket. Substrate contacts are provided by residues 229–231 (TID), 268–269 (KY), 276–278 (MGR), Glu-337, and 442–445 (YEGR). Asp-231 acts as the Proton acceptor in catalysis.

The protein belongs to the phosphofructokinase type A (PFKA) family. PPi-dependent PFK group II subfamily. Clade 'Long' sub-subfamily. Tetramer of two alpha (regulatory) and two beta (catalytic) chains. The cofactor is Mg(2+).

It is found in the cytoplasm. It carries out the reaction beta-D-fructose 6-phosphate + diphosphate = beta-D-fructose 1,6-bisphosphate + phosphate + H(+). Its pathway is carbohydrate degradation; glycolysis; D-glyceraldehyde 3-phosphate and glycerone phosphate from D-glucose: step 3/4. With respect to regulation, allosterically activated by fructose 2,6-bisphosphate. Catalytic subunit of pyrophosphate--fructose 6-phosphate 1-phosphotransferase. Catalyzes the phosphorylation of D-fructose 6-phosphate, the first committing step of glycolysis. Uses inorganic phosphate (PPi) as phosphoryl donor instead of ATP like common ATP-dependent phosphofructokinases (ATP-PFKs), which renders the reaction reversible, and can thus function both in glycolysis and gluconeogenesis. The sequence is that of Pyrophosphate--fructose 6-phosphate 1-phosphotransferase subunit beta 2 from Arabidopsis thaliana (Mouse-ear cress).